The chain runs to 313 residues: Type I restriction enzyme EcoprrI endonuclease subunit (313 aa).

The protein belongs to the HsdR family. In terms of assembly, the type I restriction/modification system is composed of three polypeptides R, M and S; the restriction enzyme has stoichiometry R(2)M(2)S(1) while the methyltransferase is M(2)S(1).

The catalysed reaction is Endonucleolytic cleavage of DNA to give random double-stranded fragments with terminal 5'-phosphates, ATP is simultaneously hydrolyzed.. The subtype C restriction (R) subunit of a type I restriction enzyme that recognizes 5'-CCAN(7)RTGC-3' and cleaves a random distance away. The R subunit is required for both endonuclease and ATPase activities but not for modification. Cleaves only non-methylated DNA, hemi-methylated and fully methylated DNA are not substrates. After locating a non-methylated recognition site, the enzyme complex serves as a molecular motor that translocates DNA in an ATP-dependent manner until a collision occurs that triggers cleavage. The prr locus restricts phage T4 mutants lacking polynucleotide kinase or RNA ligase; T4 mutants lacking these genes manifest a T4-induced anticodon nuclease (ACNase). This is a putative 'masking-agent' for the ACNase encoded by prrC. It is thought that Stp and other T4-encoded ACNase factors counteract the masking agents, thus activating the latent ACNase. The sequence is that of Type I restriction enzyme EcoprrI endonuclease subunit from Escherichia coli.